The sequence spans 203 residues: Thymidylate kinase (203 aa).

ATP is bound at residue 10 to 17 (GMDGAGKS).

Belongs to the thymidylate kinase family.

The enzyme catalyses dTMP + ATP = dTDP + ADP. Functionally, phosphorylation of dTMP to form dTDP in both de novo and salvage pathways of dTTP synthesis. This Methylobacillus flagellatus (strain ATCC 51484 / DSM 6875 / VKM B-1610 / KT) protein is Thymidylate kinase.